A 1307-amino-acid polypeptide reads, in one-letter code: CRISPR-associated endonuclease Cas12a (1307 aa).

The WED-I (OBD-I) stretch occupies residues 1–35; sequence MTQFEGFTNLYQVSKTLRFELIPQGKTLKHIQEQG. Residues 36–320 form an REC1 (helical-I) region; sequence FIEEDKARND…SDRNTLSFIL (285 aa). 47-51 is a crRNA binding site; it reads YKELK. Residues 74–106 adopt a coiled-coil conformation; it reads ENLSAAIDSYRKEKTEETRNALIEEQATYRNAI. CrRNA contacts are provided by residues 175–176 and 307–310; these read NR and KQIL. A WED-II (helical-II) region spans residues 321 to 526; sequence EEFKSDEEVI…ARNYATKKPY (206 aa). Residues 527-598 form a WED-II (OBD-I) region; that stretch reads SVEKFKLNFQ…GFDKMYYDYF (72 aa). Residues 599 to 607 constitute a DNA-binding region (PAM-binding on target DNA); the sequence is PDAAKMIPK. Positions 599 to 718 are PI (LHD); it reads PDAAKMIPKC…EYYAELNPLL (120 aa). Residues 719-884 form a WED-III (OBD-III) region; that stretch reads YHISFQRIAE…ITLNYQAANS (166 aa). Position 752-761 (752-761) interacts with crRNA; the sequence is KGHHGKPNLH. Residues 780–783 constitute a DNA-binding region (target DNA); the sequence is KLNG. The For pre-crRNA processing role is filled by histidine 800. CrRNA is bound at residue 806 to 808; the sequence is MLN. Catalysis depends on for pre-crRNA processing residues lysine 809 and lysine 860. The ruvC-I stretch occupies residues 885–940; sequence PSKFNQRVNAYLKEHPETPIIGIDRGERNLIYITVIDSTGKILEQRSLNTIQQFDY. Catalysis depends on aspartate 908, which acts as the For DNase activity of RuvC domain. Residues 941 to 957 are bridge helix; that stretch reads QKKLDNREKERVAARQA. Residues 951-968 constitute a DNA-binding region (target DNA); the sequence is RVAARQAWSVVGTIKDLK. Positions 958–1066 are ruvC-II; it reads WSVVGTIKDL…TQSGFLFYVP (109 aa). The active-site For DNase activity of RuvC domain is glutamate 993. The target DNA DNA-binding region spans 1051–1053; it reads SFA. Positions 1067–1262 are nuclease domain; it reads APYTSKIDPL…FQNPEWPMDA (196 aa). Arginine 1226 serves as the catalytic For DNase activity of nuclease domain. Catalysis depends on aspartate 1263, which acts as the For DNase activity of RuvC domain. Positions 1263 to 1307 are ruvC-III; that stretch reads DANGAYHIALKGQLLLNHLKESKDLKLQNGISNQDWLAYIQELRN.

Belongs to the CRISPR-associated endonuclease Cas12a family. In terms of assembly, monomer. It depends on Mg(2+) as a cofactor.

It catalyses the reaction Endonucleolytic cleavage to 5'-phosphodinucleotide and 5'-phosphooligonucleotide end-products.. The catalysed reaction is RNA = a 5'-hydroxy-ribonucleotide + n nucleoside-2',3'-cyclophosphates.. Its function is as follows. CRISPR (clustered regularly interspaced short palindromic repeat), is an adaptive immune system that provides protection against mobile genetic elements (viruses, transposable elements and conjugative plasmids). CRISPR clusters contain sequences complementary to antecedent mobile elements and target invading nucleic acids. CRISPR clusters are transcribed and processed into CRISPR RNA (crRNA). Recognizes a short motif in the CRISPR repeat sequences (the 5' PAM or protospacer adjacent motif, TTTN in this organism) to help distinguish self versus nonself, as targets within the bacterial CRISPR locus do not have PAMs. Has dsDNA endonuclease activity, results in staggered 4-base 5' overhangs 19 and 22 bases downstream of the PAM on the non-targeted and targeted strand respectively. Non-target strand cleavage by the RuvC domain is probably a prerequisite of target strand cleavage by the Nuc domain. Protects E.coli against plasmids and bacteriophage M13mp18, phage T4 with hydroxymethyl or unmodified (but not glycosylated) cytosines and to a lesser extent against lambda and VpaE1 phage. In this CRISPR system correct processing of pre-crRNA requires only this protein and the CRISPR locus. This is CRISPR-associated endonuclease Cas12a from Acidaminococcus sp. (strain BV3L6).